The sequence spans 308 residues: D-alanine--D-alanine ligase (308 aa).

The 198-residue stretch at 104 to 301 folds into the ATP-grasp domain; it reads KQIWQGSDLP…FDELCVAILE (198 aa). 130 to 185 serves as a coordination point for ATP; it reads IAELGLPVIIKPVHEGSSVGMSKVEKAEDFAAAIEKATQHDAVVMAEKWITGREFT. Residues D255, E268, and N270 each coordinate Mg(2+).

It belongs to the D-alanine--D-alanine ligase family. The cofactor is Mg(2+). Requires Mn(2+) as cofactor.

The protein resides in the cytoplasm. The catalysed reaction is 2 D-alanine + ATP = D-alanyl-D-alanine + ADP + phosphate + H(+). Its pathway is cell wall biogenesis; peptidoglycan biosynthesis. Cell wall formation. This chain is D-alanine--D-alanine ligase, found in Acinetobacter baumannii (strain ACICU).